A 102-amino-acid polypeptide reads, in one-letter code: MTPTACATVSTMTSVGVRALRQRASELLRRVEAGETIEITDRGRPVALLSPLPQGGPYEQLLASGEIERATLDVVDLPEPLDLDAGVELPSVTLARLREHER.

This sequence belongs to the phD/YefM antitoxin family.

Antitoxin component of a type II toxin-antitoxin (TA) system. Neutralizes the effect of cognate toxin VapC46. The sequence is that of Antitoxin VapB46 (vapB46) from Mycobacterium tuberculosis (strain CDC 1551 / Oshkosh).